Reading from the N-terminus, the 932-residue chain is Glycine dehydrogenase (decarboxylating) (932 aa).

Lysine 685 carries the post-translational modification N6-(pyridoxal phosphate)lysine.

The protein belongs to the GcvP family. The glycine cleavage system is composed of four proteins: P, T, L and H. Pyridoxal 5'-phosphate serves as cofactor.

The enzyme catalyses N(6)-[(R)-lipoyl]-L-lysyl-[glycine-cleavage complex H protein] + glycine + H(+) = N(6)-[(R)-S(8)-aminomethyldihydrolipoyl]-L-lysyl-[glycine-cleavage complex H protein] + CO2. Its function is as follows. The glycine cleavage system catalyzes the degradation of glycine. The P protein binds the alpha-amino group of glycine through its pyridoxal phosphate cofactor; CO(2) is released and the remaining methylamine moiety is then transferred to the lipoamide cofactor of the H protein. This chain is Glycine dehydrogenase (decarboxylating), found in Brucella melitensis biotype 1 (strain ATCC 23456 / CCUG 17765 / NCTC 10094 / 16M).